A 1003-amino-acid chain; its full sequence is Calcium-transporting ATPase sarcoplasmic/endoplasmic reticulum type (1003 aa).

The Cytoplasmic segment spans residues 1 to 59; that stretch reads MEDAHAKKWEEVVDYFGVDPERGLALEQVKKNQEKYGPNELPAEEGKSLLTLILEQFDD. Residues 60–78 form a helical membrane-spanning segment; sequence LLVKILLLAAIISLVLALF. The Extracellular portion of the chain corresponds to 79-89; it reads EEHDDEAEQLT. The chain crosses the membrane as a helical span at residues 90-110; the sequence is AYVEPFVILLILIANAVVGVW. Residues 111-262 are Cytoplasmic-facing; it reads QEKNAESAIE…QQKLDEFGEQ (152 aa). Residues 263–282 form a helical membrane-spanning segment; the sequence is LSKVISVICVAVWAINIGHF. The Extracellular portion of the chain corresponds to 283-300; sequence NDPAHGGSWIKGAIYYFK. Residues 301–318 traverse the membrane as a helical segment; the sequence is IAVALAVAAIPEGLPAVI. Topologically, residues 319–775 are cytoplasmic; that stretch reads TTCLALGTRR…RYLISSNIGE (457 aa). Asp-354 serves as the catalytic 4-aspartylphosphate intermediate. Lys-519 contributes to the ATP binding site. The helical transmembrane segment at 776–799 threads the bilayer; it reads VVSIFLTAALGLPEALIPVQLLWV. Residues 800–840 are Extracellular-facing; the sequence is NLVTDGLPATALGFNPPDLDIMNKPPRRADEGLITGWLFFR. Residues 841–863 form a helical membrane-spanning segment; the sequence is YMAIGTYVGAATVGAAAHWFMMS. The Cytoplasmic portion of the chain corresponds to 864-898; it reads PTGPGLNFYQLSHHLQCTPENEYFEGIDCEIFSDP. Residues 899–917 traverse the membrane as a helical segment; that stretch reads HPMTMALSVLVTIEMLNAI. At 918–934 the chain is on the extracellular side; that stretch reads NSLSENQSLLVMPPWSN. Residues 935–954 traverse the membrane as a helical segment; sequence IWLISAICLSMTLHFVILYV. Residues 955–1003 are Cytoplasmic-facing; the sequence is EILSTVFQICPLTLTEWIVVLKISFPVLLLDEVLKFVARKYTDEFSFIK.

This sequence belongs to the cation transport ATPase (P-type) (TC 3.A.3) family.

Its subcellular location is the sarcoplasmic reticulum membrane. The catalysed reaction is Ca(2+)(in) + ATP + H2O = Ca(2+)(out) + ADP + phosphate + H(+). Functionally, this magnesium-dependent enzyme catalyzes the hydrolysis of ATP coupled with the transport of the calcium. This chain is Calcium-transporting ATPase sarcoplasmic/endoplasmic reticulum type, found in Artemia franciscana (Brine shrimp).